The primary structure comprises 542 residues: Major facilitator superfamily transporter mfsA (542 aa).

Helical transmembrane passes span 19-39 (FAAV…AGLL), 70-90 (GAVT…SMFC), 99-119 (LIFM…VCYT), 127-149 (FVIG…PVWQ), 160-180 (FLVC…YWVV), 194-214 (FPVA…LMLP), 321-341 (IMGG…FFMI), 349-369 (LYLI…ACLI), 380-400 (AVGI…LPWI), 413-432 (VGAS…VVMF), and 444-464 (VYLF…FFYV).

This sequence belongs to the major facilitator superfamily. Sugar transporter (TC 2.A.1.1) family.

It localises to the membrane. Functionally, major facilitator superfamily transporter that may be involved in A.fumigatus adaptation to azoles such as vorizonazole. This chain is Major facilitator superfamily transporter mfsA, found in Aspergillus fumigatus (strain ATCC MYA-4609 / CBS 101355 / FGSC A1100 / Af293) (Neosartorya fumigata).